The chain runs to 208 residues: Imidazoleglycerol-phosphate dehydratase (208 aa).

This sequence belongs to the imidazoleglycerol-phosphate dehydratase family.

Its subcellular location is the cytoplasm. The catalysed reaction is D-erythro-1-(imidazol-4-yl)glycerol 3-phosphate = 3-(imidazol-4-yl)-2-oxopropyl phosphate + H2O. It functions in the pathway amino-acid biosynthesis; L-histidine biosynthesis; L-histidine from 5-phospho-alpha-D-ribose 1-diphosphate: step 6/9. This Pseudarthrobacter chlorophenolicus (strain ATCC 700700 / DSM 12829 / CIP 107037 / JCM 12360 / KCTC 9906 / NCIMB 13794 / A6) (Arthrobacter chlorophenolicus) protein is Imidazoleglycerol-phosphate dehydratase.